Here is a 418-residue protein sequence, read N- to C-terminus: D-amino acid dehydrogenase (418 aa).

Position 3 to 17 (3 to 17 (VLVLGAGVAGVSSAW)) interacts with FAD.

Belongs to the DadA oxidoreductase family. It depends on FAD as a cofactor.

It catalyses the reaction a D-alpha-amino acid + A + H2O = a 2-oxocarboxylate + AH2 + NH4(+). Oxidative deamination of D-amino acids. The sequence is that of D-amino acid dehydrogenase from Neisseria meningitidis serogroup A / serotype 4A (strain DSM 15465 / Z2491).